The chain runs to 749 residues: Cytosolic phospholipase A2 (749 aa).

One can recognise a C2 domain in the interval 1–124 (MASIDPYQHI…GEKKQVPFTF (124 aa)). Positions 1–178 (MASIDPYQHI…LRKLLGPEKT (178 aa)) are phospholipid binding. Residues Asp-40, Thr-41, Asp-43, Asn-65, Asp-93, Ala-94, and Asn-95 each coordinate Ca(2+). The region spanning 138–740 (VCSSTDLRFS…NDVEARKLLH (603 aa)) is the PLA2c domain. Residue Ser-229 is the Nucleophile of the active site. The tract at residues 417–458 (MEEEIENLKPKHILGNDSSDSDDEMQEPKGTENSKAEEEYQR) is disordered. The span at 442 to 457 (QEPKGTENSKAEEEYQ) shows a compositional bias: basic and acidic residues. Residue Asp-549 is the Proton acceptor of the active site.

It is found in the cytoplasm. The protein localises to the cytoplasmic vesicle. It catalyses the reaction a 1,2-diacyl-sn-glycero-3-phosphocholine + H2O = a 1-acyl-sn-glycero-3-phosphocholine + a fatty acid + H(+). The enzyme catalyses a 1-acyl-sn-glycero-3-phosphocholine + H2O = sn-glycerol 3-phosphocholine + a fatty acid + H(+). With respect to regulation, stimulated by agonists such as ATP, EGF, thrombin and bradykinin as well as by cytosolic Ca(2+). In terms of biological role, selectively hydrolyzes arachidonyl phospholipids in the sn-2 position releasing arachidonic acid. Together with its lysophospholipid activity, it is implicated in the initiation of the inflammatory response. This is Cytosolic phospholipase A2 (pla2g4a) from Xenopus tropicalis (Western clawed frog).